The chain runs to 239 residues: Tetraspanin-9 (239 aa).

Over 1–13 (MARGCLCCLKYMM) the chain is Cytoplasmic. Residues 14 to 34 (FLFNLIFWLCGCGLLGVGIWL) form a helical membrane-spanning segment. The Extracellular portion of the chain corresponds to 35-55 (SVSQGNFATFSPSFPSLSAAN). A helical transmembrane segment spans residues 56–76 (LVIVIGTVVMVTGFLGCLGAI). The Cytoplasmic segment spans residues 77-85 (KENKCLLLS). Residues 86-106 (FFIILLIILLTELILLILFFV) form a helical membrane-spanning segment. The Extracellular segment spans residues 107 to 203 (YMDKVNENAK…VKMWFDDNKH (97 aa)). A glycan (N-linked (GlcNAc...) asparagine) is linked at Asn-180. The helical transmembrane segment at 204 to 224 (VLGTIGMCILIIQILGMAFSM) threads the bilayer. Residues 225–239 (TLFQQIHRTGKKYDA) lie on the Cytoplasmic side of the membrane.

Belongs to the tetraspanin (TM4SF) family.

Its subcellular location is the membrane. The sequence is that of Tetraspanin-9 (tspan9) from Xenopus laevis (African clawed frog).